Consider the following 207-residue polypeptide: Cyclin-dependent kinase 2-interacting protein (207 aa).

A coiled-coil region spans residues 78–99 (TDKVELDRLCSELLQTIENMEK).

This sequence belongs to the CINP family. As to quaternary structure, homodimer. Part of the 55LCC heterohexameric ATPase complex.

It is found in the nucleus. Functionally, component of the DNA replication complex, which interacts with two kinases, CDK2 and CDC7, thereby providing a functional and physical link between CDK2 and CDC7 during firing of the origins of replication. Regulates ATR-mediated checkpoint signaling in response to DNA damage. Part of the 55LCC heterohexameric ATPase complex which is chromatin-associated and promotes replisome proteostasis to maintain replication fork progression and genome stability. Required for replication fork progression, sister chromatid cohesion, and chromosome stability. The ATPase activity is specifically enhanced by replication fork DNA and is coupled to cysteine protease-dependent cleavage of replisome substrates in response to replication fork damage. Uses ATPase activity to process replisome substrates in S-phase, facilitating their proteolytic turnover from chromatin to ensure DNA replication and mitotic fidelity. As part of 55LCC complex, also involved in the cytoplasmic maturation steps of pre-60S ribosomal particles by promoting the release of shuttling protein RSL24D1/RLP24 from the pre-ribosomal particles. The chain is Cyclin-dependent kinase 2-interacting protein (cinp) from Xenopus laevis (African clawed frog).